Reading from the N-terminus, the 793-residue chain is MKVTPLMEQYLRIKEQYKDSILLFRLGDFYEAFFEDAKIVSKVLNIVLTRRQDAPMAGIPYHALNSYLKKLVEAGYKVAICDQMEEPSKSKKLIRREVTRVVTPGSILEDEFLSETNNYMAVVSEEKGQYCTIFCDVSTGEVLVHESSDEQETMDLLKNYSISQIVCPDHLKPSLKERFPGVYTESISEWYFSDLEEVEKAYNLKDIHHFELSSLALKTLAALIKYVKYTMITEELNLKPPLLISQRDYMILDSATVENLSLIPGDRGKNLFDVLNNTETPMGARLLKKWILHPLVDRKQIEERLETVEKLVSDRMNLEELRDLLSNVRDVERIVSRVEYNRSVPRDLVALRETLEIIPKLNEILSTFGVFKNLAFPERLLDLLQRAVEDDPAGSPGEGKVIKRGFSPELDEYRDLLEHAEERLKEFEEKERKRTGIQKLKVGYNQVFGYYIEVTKANLDKIPDDYERKQTLVNSERFITPELKEFETKIMAAKERIEELEKELFKNVCEEVKKHKEILLKISEELAKIDVLSTLAYDAILYSYTKPIFSEGRLEIKGGRHPIVERFTQNFVENDIYMDNERRFVVITGPNMSGKSTFIRQVGLISLMAQIGSFVPAQKAILPVFDRIFTRMGARDDLAGGRSTFLVEMNEMALILLKSTEKSLVLLDEVGRGTSTQDGVSIAWAISEELIKRGCKVLFATHFTELTELEKHFPQVQNKTILVKEEGKNVIFTHKVVDGVADRSYGIEVAKIAGIPDRVINRAYEILERNFKNNTKKNGKSNRFSQQIPLFPV.

589–596 is an ATP binding site; sequence GPNMSGKS.

The protein belongs to the DNA mismatch repair MutS family.

In terms of biological role, this protein is involved in the repair of mismatches in DNA. It is possible that it carries out the mismatch recognition step. This protein has a weak ATPase activity. The polypeptide is DNA mismatch repair protein MutS (Thermotoga petrophila (strain ATCC BAA-488 / DSM 13995 / JCM 10881 / RKU-1)).